The sequence spans 599 residues: Elongation factor 4 (599 aa).

The tr-type G domain occupies 2-184 (KNIRNFSIIA…EIVAKIPAPK (183 aa)). GTP-binding positions include 14–19 (DHGKST) and 131–134 (NKID).

Belongs to the TRAFAC class translation factor GTPase superfamily. Classic translation factor GTPase family. LepA subfamily.

It localises to the cell inner membrane. The enzyme catalyses GTP + H2O = GDP + phosphate + H(+). Functionally, required for accurate and efficient protein synthesis under certain stress conditions. May act as a fidelity factor of the translation reaction, by catalyzing a one-codon backward translocation of tRNAs on improperly translocated ribosomes. Back-translocation proceeds from a post-translocation (POST) complex to a pre-translocation (PRE) complex, thus giving elongation factor G a second chance to translocate the tRNAs correctly. Binds to ribosomes in a GTP-dependent manner. This chain is Elongation factor 4, found in Mannheimia succiniciproducens (strain KCTC 0769BP / MBEL55E).